Here is a 33-residue protein sequence, read N- to C-terminus: Dermaseptin-J7 (33 aa).

Residue Val-33 is modified to Valine amide.

As to expression, expressed by the skin glands.

It is found in the secreted. Functionally, has antimicrobial activity. This Phasmahyla jandaia (Jandaia leaf frog) protein is Dermaseptin-J7.